The chain runs to 237 residues: D-aminoacyl-tRNA deacylase (237 aa).

The protein belongs to the DtdA deacylase family. In terms of assembly, monomer. Zn(2+) serves as cofactor.

The catalysed reaction is a D-aminoacyl-tRNA + H2O = a tRNA + a D-alpha-amino acid + H(+). It catalyses the reaction glycyl-tRNA(Ala) + H2O = tRNA(Ala) + glycine + H(+). Its function is as follows. D-aminoacyl-tRNA deacylase with broad substrate specificity. By recycling D-aminoacyl-tRNA to D-amino acids and free tRNA molecules, this enzyme counteracts the toxicity associated with the formation of D-aminoacyl-tRNA entities in vivo. This is D-aminoacyl-tRNA deacylase from Sulfurisphaera tokodaii (strain DSM 16993 / JCM 10545 / NBRC 100140 / 7) (Sulfolobus tokodaii).